The following is a 149-amino-acid chain: Small ribosomal subunit protein bS6 (149 aa).

Residues Val-93 to Ala-149 form a disordered region. Positions Gly-94–Ala-149 are enriched in basic and acidic residues.

This sequence belongs to the bacterial ribosomal protein bS6 family.

Functionally, binds together with bS18 to 16S ribosomal RNA. This chain is Small ribosomal subunit protein bS6, found in Rhizobium meliloti (strain 1021) (Ensifer meliloti).